We begin with the raw amino-acid sequence, 372 residues long: Glutamate 5-kinase (372 aa).

K14 is a binding site for ATP. Substrate contacts are provided by S54, D141, and N153. An ATP-binding site is contributed by 173-174 (TD). One can recognise a PUA domain in the interval 280–358 (RGHVVIDDGA…GEIESVLGYM (79 aa)).

The protein belongs to the glutamate 5-kinase family.

The protein localises to the cytoplasm. The enzyme catalyses L-glutamate + ATP = L-glutamyl 5-phosphate + ADP. Its pathway is amino-acid biosynthesis; L-proline biosynthesis; L-glutamate 5-semialdehyde from L-glutamate: step 1/2. In terms of biological role, catalyzes the transfer of a phosphate group to glutamate to form L-glutamate 5-phosphate. The protein is Glutamate 5-kinase of Paraburkholderia xenovorans (strain LB400).